A 371-amino-acid polypeptide reads, in one-letter code: Putative glutamate--cysteine ligase 2 (371 aa).

The protein belongs to the glutamate--cysteine ligase type 2 family. YbdK subfamily.

The catalysed reaction is L-cysteine + L-glutamate + ATP = gamma-L-glutamyl-L-cysteine + ADP + phosphate + H(+). In terms of biological role, ATP-dependent carboxylate-amine ligase which exhibits weak glutamate--cysteine ligase activity. This chain is Putative glutamate--cysteine ligase 2, found in Burkholderia cenocepacia (strain HI2424).